A 160-amino-acid chain; its full sequence is SsrA-binding protein (160 aa).

Belongs to the SmpB family.

It is found in the cytoplasm. Functionally, required for rescue of stalled ribosomes mediated by trans-translation. Binds to transfer-messenger RNA (tmRNA), required for stable association of tmRNA with ribosomes. tmRNA and SmpB together mimic tRNA shape, replacing the anticodon stem-loop with SmpB. tmRNA is encoded by the ssrA gene; the 2 termini fold to resemble tRNA(Ala) and it encodes a 'tag peptide', a short internal open reading frame. During trans-translation Ala-aminoacylated tmRNA acts like a tRNA, entering the A-site of stalled ribosomes, displacing the stalled mRNA. The ribosome then switches to translate the ORF on the tmRNA; the nascent peptide is terminated with the 'tag peptide' encoded by the tmRNA and targeted for degradation. The ribosome is freed to recommence translation, which seems to be the essential function of trans-translation. The chain is SsrA-binding protein from Marinobacter nauticus (strain ATCC 700491 / DSM 11845 / VT8) (Marinobacter aquaeolei).